Here is a 36-residue protein sequence, read N- to C-terminus: Photosystem I reaction center subunit VIII (36 aa).

A helical membrane pass occupies residues 6-28; that stretch reads LPSIFVPLVGLMFPAIAMASLSL.

It belongs to the PsaI family.

Its subcellular location is the plastid. The protein localises to the chloroplast thylakoid membrane. Its function is as follows. May help in the organization of the PsaL subunit. This is Photosystem I reaction center subunit VIII from Calycanthus floridus var. glaucus (Eastern sweetshrub).